The chain runs to 331 residues: Glycerophosphodiester phosphodiesterase 1 (331 aa).

The Cytoplasmic portion of the chain corresponds to Met1 to Leu3. A helical transmembrane segment spans residues Trp4–Val24. Over Thr25 to His247 the chain is Lumenal. The GP-PDE domain occupies Ile65 to Phe331. Mg(2+)-binding residues include Glu97 and Asp99. N-linked (GlcNAc...) asparagine glycosylation occurs at Asn168. Position 174 (Asp174) interacts with Mg(2+). N-linked (GlcNAc...) asparagine glycosylation occurs at Asn198. The helical transmembrane segment at Phe248–Leu268 threads the bilayer. The Cytoplasmic segment spans residues Cys269–Phe331.

It belongs to the glycerophosphoryl diester phosphodiesterase family. Interacts with PRAF2. Interacts with RGS16. The cofactor is Mg(2+). In terms of processing, N-glycosylated. As to expression, widely expressed.

It localises to the cell membrane. It is found in the cytoplasmic vesicle membrane. The enzyme catalyses sn-glycero-3-phospho-1D-myo-inositol + H2O = myo-inositol + sn-glycerol 3-phosphate + H(+). The catalysed reaction is 1-O-(1Z-octadecenyl)-sn-glycero-3-phospho-(N-5Z,8Z,11Z,14Z-eicosatetraenoyl)-ethanolamine + H2O = 1-O-(1Z-octadecenyl)-sn-glycero-3-phosphate + N-(5Z,8Z,11Z,14Z-eicosatetraenoyl)-ethanolamine + H(+). It catalyses the reaction 1-O-(1Z-octadecenyl)-sn-glycero-3-phospho-(N-9Z-octadecenoyl)-ethanolamine + H2O = 1-O-(1Z-octadecenyl)-sn-glycero-3-phosphate + N-(9Z-octadecenoyl) ethanolamine + H(+). It carries out the reaction 1-O-(1Z-octadecenyl)-sn-glycero-3-phospho-N-hexadecanoyl-ethanolamine + H2O = 1-O-(1Z-octadecenyl)-sn-glycero-3-phosphate + N-hexadecanoylethanolamine + H(+). The enzyme catalyses N-(4Z,7Z,10Z,13Z,16Z,19Z)-docosahexaenoyl-sn-glycero-3-phosphoethanolamine + H2O = N-(4Z,7Z,10Z,13Z,16Z,19Z)-docosahexaenoyl ethanolamine + sn-glycerol 3-phosphate + H(+). The catalysed reaction is N-eicosanoyl-sn-glycero-3-phosphoethanolamine + H2O = N-eicosanoyl ethanolamine + sn-glycerol 3-phosphate + H(+). It catalyses the reaction N-hexadecanoyl-sn-glycero-3-phosphoethanolamine + H2O = N-hexadecanoylethanolamine + sn-glycerol 3-phosphate + H(+). It carries out the reaction N-(9Z-octadecenoyl)-sn-glycero-3-phosphoethanolamine + H2O = N-(9Z-octadecenoyl) ethanolamine + sn-glycerol 3-phosphate + H(+). The enzyme catalyses N-(5Z,8Z,11Z,14Z-eicosatetraenoyl)-sn-glycero-3-phosphoethanolamine + H2O = N-(5Z,8Z,11Z,14Z-eicosatetraenoyl)-ethanolamine + sn-glycerol 3-phosphate + H(+). With respect to regulation, inhibited by EDTA, calcium chloride, and zinc chloride. Enhanced by magnesium chloride. Glycerophosphodiester phosphodiesterase activity can be modulated by G-protein signaling pathways. Its function is as follows. Hydrolyzes the phosphodiester bond of glycerophosphodiesters such as glycerophosphoinositol (GroPIns) and glycerophosphoethanolamine (GroPEth), to yield a glycerol phosphate and an alcohol. Hydrolyzes glycerophospho-N-acylethanolamines to N-acylethanolamines in the brain and participates in bioactive N-acylethanolamine biosynthesis such as anandamide (an endocannabinoid), N-palmitoylethanolamine (an anti-inflammatory), and N-oleoylethanolamine (an anorexic). In addition, has a lysophospholipase D activity by hydrolyzing N-acyl-lysoplasmenylethanolamine (N-acyl-lysoPlsEt) to N-acylethanolamine. However lysophospholipase D activity is lower than glycerophosphodiester phosphodiesterase activity. Has little or no activity towards glycerophosphocholine. This Homo sapiens (Human) protein is Glycerophosphodiester phosphodiesterase 1.